The sequence spans 373 residues: MFHLLGAQQNQKLKRRRFFCPVCGGELAVKLGLQKAPHFAHKQNKSCAIDIEPESAYHLEGKRQLYVWLKTQRASPILEPYIRTINQRPDVMARIKEHMLAVEYQCATIAPDVFQKRTEGFKQEGIIPQWIMGYSRLKRTASSFYQLSTFHWQFINASPYRELICYCPERRSFLRLSHIIPFYTNHSYSSVQTIPIHRAGAGDLFFTEPKPSIQYSGWTKAIHRFRHKPHRFNSKETNRLRLLFYEKRQTPFSFLPTEVFVPVRKGAVFKSPVFVWQGFLYLFMTDLGGKRAPIRFSAVLQQCKLHIHNKNIALRSECSEECLSEAVKQYIDFLCKKGFLRETQKEVYVLNQPAGGIHSMQDLIERDRSCFIE.

It is found in the cytoplasm. Required for optimal transformation. This is Competence protein CoiA (coiA) from Bacillus subtilis (strain 168).